We begin with the raw amino-acid sequence, 247 residues long: uncharacterized protein (247 aa).

A coiled-coil region spans residues 200 to 225 (SGKYSELKTKVNDIENDLRTLSSNTN).

This is an uncharacterized protein from Acanthamoeba polyphaga (Amoeba).